Consider the following 600-residue polypeptide: Repressor of filamentous growth 1 (600 aa).

A compositionally biased stretch (polar residues) spans 1–14 (MSTAIYYSTHNNMH). 6 disordered regions span residues 1-59 (MSTA…NSAN), 112-160 (NGGY…TDIS), 180-200 (GIDGNFSHNNNNNNNNNNNNN), 266-337 (AEEE…SRDN), 427-549 (STTS…GYDN), and 564-600 (QQGLQVQQQGQHYNSGLHAAQHYQQQQQQHHQQQPPQ). Low complexity-rich tracts occupy residues 20 to 39 (TNGSGSTTSGNPGANPSNPN) and 47 to 59 (INNNSNIGLNSAN). A compositionally biased stretch (polar residues) spans 131–160 (FDTSYSNQTTPTSAYTNFNNDSTHSPTDIS). Residues 188–200 (NNNNNNNNNNNNN) are compositionally biased toward low complexity. The HMG box DNA-binding region spans 212 to 281 (IPRPRNAFIL…NHAKKYPGYR (70 aa)). A compositionally biased stretch (basic residues) spans 272 to 289 (NHAKKYPGYRYTPRRNGR). Residues 297–312 (KNKPLPNNKSNSISGM) show a composition bias toward low complexity. Over residues 313-322 (SGSGGGGGSI) the composition is skewed to gly residues. Positions 427–470 (STTSTTAPTTTTTTTTNASSIGLSVPPTATTTSTSSQPTSANSQ) are enriched in low complexity. The span at 481 to 496 (PVSSTHHQSSISEIAA) shows a compositional bias: polar residues. The segment covering 497–506 (QQQQQQQQQQ) has biased composition (low complexity). Residues 507 to 547 (FMYNTNYSTIPPNNTTTMQQHSAGTGNDYSLNGNNSGNTGY) show a composition bias toward polar residues. Composition is skewed to low complexity over residues 564-574 (QQGLQVQQQGQ) and 581-600 (HAAQHYQQQQQQHHQQQPPQ).

The protein localises to the nucleus. Its function is as follows. Transcription regulator that functions in both the positive and negative regulation of filamentous growth, depending upon the environmental conditions. Recruits the TUP1/SSN6 general repression complex to achieve repression. Regulates genes encoding cell wall components that are specifically expressed in the filamentous forms such as HWP1, RBT1, HYR1, ECE1, ALS1, RBT4 and RBT5. This is Repressor of filamentous growth 1 (RFG1) from Candida albicans (strain SC5314 / ATCC MYA-2876) (Yeast).